The chain runs to 431 residues: Intraflagellar transport protein 38 (431 aa).

A coiled-coil region spans residues 177 to 218 (SAAVQQRIKNLAAECNTLQEEVTTNKREKAKLEEQITQKKQS). Residues 346–431 (INTNAEIPDD…EELDPDNIEF (86 aa)) form a disordered region. Residues 352–370 (IPDDESYSYSYEEEEEEEQ) are compositionally biased toward acidic residues. A compositionally biased stretch (basic and acidic residues) spans 384-405 (PETHSNGEKHRGLDELSHKSNE). The span at 420–431 (GGEELDPDNIEF) shows a compositional bias: acidic residues.

It belongs to the CLUAP1 family.

It is found in the cell projection. Its subcellular location is the cilium. The protein resides in the flagellum. The protein localises to the cytoplasm. It localises to the cytoskeleton. It is found in the flagellum axoneme. Its subcellular location is the flagellum basal body. Functionally, component of the intraflagellar transport complex B (IFT-B) involved in flagellar assembly. The chain is Intraflagellar transport protein 38 from Giardia intestinalis (strain ATCC 50803 / WB clone C6) (Giardia lamblia).